A 681-amino-acid polypeptide reads, in one-letter code: Potassium-transporting ATPase ATP-binding subunit (681 aa).

4 consecutive transmembrane segments (helical) span residues 30–50 (LLVYVGAILATSLYFLGFFGI), 59–79 (LAIALILWFTVLFANFAEAIA), 216–236 (ILLVTLSIIFLAVSATLLPFT), and 255–275 (IALLVCLAPTTIGALLSSIGI). Aspartate 306 acts as the 4-aspartylphosphate intermediate in catalysis. ATP contacts are provided by residues aspartate 343, glutamate 347, 376-383 (FTATTRMS), and lysine 394. Positions 517 and 521 each coordinate Mg(2+). 3 helical membrane-spanning segments follow: residues 587 to 607 (FAIIPVLFYGIFPQLEALNLM), 615 to 635 (AILSAIIYNALIIIFLIPLSL), and 661 to 681 (LVAPFIAIKLIDMLLTVLGIV).

Belongs to the cation transport ATPase (P-type) (TC 3.A.3) family. Type IA subfamily. As to quaternary structure, the system is composed of three essential subunits: KdpA, KdpB and KdpC.

The protein localises to the cell membrane. The enzyme catalyses K(+)(out) + ATP + H2O = K(+)(in) + ADP + phosphate + H(+). Part of the high-affinity ATP-driven potassium transport (or Kdp) system, which catalyzes the hydrolysis of ATP coupled with the electrogenic transport of potassium into the cytoplasm. This subunit is responsible for energy coupling to the transport system and for the release of the potassium ions to the cytoplasm. This chain is Potassium-transporting ATPase ATP-binding subunit, found in Listeria welshimeri serovar 6b (strain ATCC 35897 / DSM 20650 / CCUG 15529 / CIP 8149 / NCTC 11857 / SLCC 5334 / V8).